The chain runs to 232 residues: Large ribosomal subunit protein uL1 (232 aa).

The protein belongs to the universal ribosomal protein uL1 family. Part of the 50S ribosomal subunit.

Binds directly to 23S rRNA. The L1 stalk is quite mobile in the ribosome, and is involved in E site tRNA release. Its function is as follows. Protein L1 is also a translational repressor protein, it controls the translation of the L11 operon by binding to its mRNA. The polypeptide is Large ribosomal subunit protein uL1 (Methylobacterium radiotolerans (strain ATCC 27329 / DSM 1819 / JCM 2831 / NBRC 15690 / NCIMB 10815 / 0-1)).